Reading from the N-terminus, the 425-residue chain is Serine--tRNA ligase (425 aa).

232–234 (TSE) is a binding site for L-serine. Residues 263–265 (RRE) and valine 279 contribute to the ATP site. Residue glutamate 286 coordinates L-serine. Residue 350–353 (EVVS) participates in ATP binding. Threonine 387 is a binding site for L-serine.

The protein belongs to the class-II aminoacyl-tRNA synthetase family. Type-1 seryl-tRNA synthetase subfamily. Homodimer. The tRNA molecule binds across the dimer.

It localises to the cytoplasm. The enzyme catalyses tRNA(Ser) + L-serine + ATP = L-seryl-tRNA(Ser) + AMP + diphosphate + H(+). The catalysed reaction is tRNA(Sec) + L-serine + ATP = L-seryl-tRNA(Sec) + AMP + diphosphate + H(+). Its pathway is aminoacyl-tRNA biosynthesis; selenocysteinyl-tRNA(Sec) biosynthesis; L-seryl-tRNA(Sec) from L-serine and tRNA(Sec): step 1/1. In terms of biological role, catalyzes the attachment of serine to tRNA(Ser). Is also able to aminoacylate tRNA(Sec) with serine, to form the misacylated tRNA L-seryl-tRNA(Sec), which will be further converted into selenocysteinyl-tRNA(Sec). This is Serine--tRNA ligase from Methanoregula boonei (strain DSM 21154 / JCM 14090 / 6A8).